The chain runs to 122 residues: Large ribosomal subunit protein uL14 (122 aa).

Belongs to the universal ribosomal protein uL14 family. In terms of assembly, part of the 50S ribosomal subunit. Forms a cluster with proteins L3 and L19. In the 70S ribosome, L14 and L19 interact and together make contacts with the 16S rRNA in bridges B5 and B8.

Binds to 23S rRNA. Forms part of two intersubunit bridges in the 70S ribosome. The polypeptide is Large ribosomal subunit protein uL14 (Vesicomyosocius okutanii subsp. Calyptogena okutanii (strain HA)).